We begin with the raw amino-acid sequence, 714 residues long: Calpain-1 catalytic subunit (714 aa).

Residues 55–354 form the Calpain catalytic domain; the sequence is LFRDEAFPPV…FTRLEICNLT (300 aa). Positions 109 and 114 each coordinate Ca(2+). Active-site residues include Cys-115, His-272, and Asn-296. The Ca(2+) site is built by Ser-316, Asp-318, and Glu-323. The residue at position 354 (Thr-354) is a Phosphothreonine. Residues 355 to 526 form a domain III region; it reads PDALKSRTIR…KSAGTAELDD (172 aa). The linker stretch occupies residues 527 to 542; sequence QIQANLPDEQVLSEEE. EF-hand domains lie at 541–576, 585–618, 615–650, and 680–714; these read EEIDENFKALFRQLAGEDMEISVKELRTILNRIISK, FSLESCRSMVNLMDRDGNGKLGLVEFNILWNRIR, NRIRNYLSIFRKFDLDKSGSMSAYEMRMAIESAGFK, and VRLETMFRFFKTLDTDLDGVVTFDLFKWLQLTMFA. Residues 543–713 form a domain IV region; that stretch reads IDENFKALFR…LFKWLQLTMF (171 aa). Ca(2+) contacts are provided by Asp-598, Asp-600, Asn-602, Lys-604, Glu-609, Asp-628, Asp-630, Ser-632, Ser-634, and Glu-639.

It belongs to the peptidase C2 family. As to quaternary structure, forms a heterodimer with a small (regulatory) subunit (CAPNS1). Ca(2+) is required as a cofactor. In terms of processing, undergoes calcium-induced successive autoproteolytic cleavages that generate a membrane-bound 78 kDa active form and an intracellular 75 kDa active form. Calpastatin reduces with high efficiency the transition from 78 kDa to 75 kDa calpain forms. As to expression, ubiquitous.

The protein localises to the cytoplasm. It is found in the cell membrane. The catalysed reaction is Broad endopeptidase specificity.. With respect to regulation, activated by micromolar concentrations of calcium and inhibited by calpastatin. Calcium-regulated non-lysosomal thiol-protease which catalyze limited proteolysis of substrates involved in cytoskeletal remodeling and signal transduction. Proteolytically cleaves CTBP1. Cleaves and activates caspase-7 (CASP7). The protein is Calpain-1 catalytic subunit (CAPN1) of Macaca fascicularis (Crab-eating macaque).